The following is a 180-amino-acid chain: uncharacterized protein (180 aa).

Residues 3–33 adopt a coiled-coil conformation; the sequence is QQQSNNSNDNKEQLDRVIESLNRVNSETKQI.

This is an uncharacterized protein from Acanthamoeba polyphaga (Amoeba).